Here is a 203-residue protein sequence, read N- to C-terminus: EF-hand calcium-binding domain-containing protein 8 (203 aa).

The segment at 61–107 (SSEKPGESPKPQKMAQPGGSQKKETSRSVPVTDPTSHNSEINQRDQQ) is disordered. The segment covering 87 to 107 (RSVPVTDPTSHNSEINQRDQQ) has biased composition (polar residues). 2 consecutive EF-hand domains span residues 111-145 (MHLADLQKVFEKEADENGALKKEGFIRIMKGVLSS) and 146-181 (MSEEMLELLFLKVDSDCNGFVTWQKYVDYMMREFQG).

The polypeptide is EF-hand calcium-binding domain-containing protein 8 (Efcab8) (Mus musculus (Mouse)).